Reading from the N-terminus, the 281-residue chain is Elongation factor Ts (281 aa).

The segment at 79–82 (TDFV) is involved in Mg(2+) ion dislocation from EF-Tu.

This sequence belongs to the EF-Ts family.

It is found in the cytoplasm. Associates with the EF-Tu.GDP complex and induces the exchange of GDP to GTP. It remains bound to the aminoacyl-tRNA.EF-Tu.GTP complex up to the GTP hydrolysis stage on the ribosome. In Wolbachia pipientis subsp. Culex pipiens (strain wPip), this protein is Elongation factor Ts.